The sequence spans 620 residues: Translocator protein BipB (620 aa).

Residues 58-95 (QCDAQPAAHDARLDDRPALRAPQERDAPPLGASDTGSR) form a disordered region. A compositionally biased stretch (basic and acidic residues) spans 66–84 (HDARLDDRPALRAPQERDA). Residues 309 to 339 (EMQAKREAELQKKSDEYQAQVKKAEEMQKTM) adopt a coiled-coil conformation. 3 helical membrane-spanning segments follow: residues 355 to 375 (FAAAAFTGGASLALAAVGLAL), 401 to 421 (AILKPLMEMISSLITKALVAC), and 430 to 450 (LAGAILGAVVTGVALVAAAFV).

The protein belongs to the SctE/SipB/YopB family.

Its subcellular location is the secreted. The protein localises to the host membrane. Its function is as follows. Plays a role in the bacterium-induced formation of multinucleated giant cell (MNGC), which is formed after host cell fusion, as well as in the intercellular spreading of bacteria and in the induction of apoptosis in macrophages. May act in concert with other effector proteins to induce fusion of host cell membranes. This is Translocator protein BipB (bipB) from Burkholderia mallei (strain NCTC 10247).